Reading from the N-terminus, the 120-residue chain is Seminal plasma protein HSP-1 (120 aa).

2 consecutive repeat copies span residues 1–13 (DLQTTGADHSATV) and 16–28 (DQQLIMTKHSATV). A 2 X approximate repeats region spans residues 1-28 (DLQTTGADHSATVNPDQQLIMTKHSATV). Residues Thr5, Thr12, Thr22, and Thr27 are each glycosylated (O-linked (GalNAc...) threonine). Fibronectin type-II domains lie at 29-73 (TPEN…YCAA) and 74-120 (TDYA…WKYC). Cystine bridges form between Cys34–Cys58, Cys48–Cys71, Cys79–Cys105, and Cys93–Cys120.

This sequence belongs to the seminal plasma protein family. As to quaternary structure, one glycoform exists as a monomer while the other forms a heterotetramer with HSP-2 and binds heparin. Post-translationally, O-glycosylated on Thr. There are two forms of HSP-1 which probably differ in the amount of sialylation of polysaccharide. Major component of seminal plasma.

It is found in the secreted. Could enhance the fertilizing capacity of spermatozoa upon interaction with heparin-like glycosaminoglycans present in the female genital tract. The chain is Seminal plasma protein HSP-1 from Equus caballus (Horse).